The following is a 594-amino-acid chain: Protein wntless (594 aa).

Residues 1–13 are Cytoplasmic-facing; the sequence is MSGTILENLSGRK. A helical membrane pass occupies residues 14–34; that stretch reads LSILVATLLLCQVLCFLLGGL. Residues 35 to 239 lie on the Lumenal side of the membrane; sequence YAPLPAGHVT…AIHQNGGFTQ (205 aa). The N-linked (GlcNAc...) asparagine glycan is linked to Asn58. The chain crosses the membrane as a helical span at residues 240-260; the sequence is IWLLLKTMLFPFVVGIMIWFW. Residues 261 to 270 are Cytoplasmic-facing; the sequence is RRVHLLQRSP. A helical transmembrane segment spans residues 271-291; sequence ALLEYMLIYLGAALTFLNLPL. Residues 292–311 are Lumenal-facing; it reads EYLSLVYEMPYMLLLSDIRQ. Residues 312 to 332 form a helical membrane-spanning segment; the sequence is GIFYAMLLTFWLVFAGEHMLI. The Cytoplasmic portion of the chain corresponds to 333–344; the sequence is QDAPNKSTIRSR. Residues 345 to 365 form a helical membrane-spanning segment; the sequence is YWKHLSAVVVGCISLFVFDIC. At 366–390 the chain is on the lumenal side; it reads ERGVQLRNPFYSIWTTPLGAKVAMT. Residues 391–411 form a helical membrane-spanning segment; the sequence is FIVLAGVSAAIYFLFLCYMIW. At 412 to 473 the chain is on the cytoplasmic side; it reads KVFRNIGDKR…ANESKGLIYR (62 aa). A helical membrane pass occupies residues 474 to 494; that stretch reads FKFLMLATLVCAALTVAGFIM. Residues 495-514 are Lumenal-facing; sequence GQMAEGQWDWNDNVAIQPTS. Residues 515–535 form a helical membrane-spanning segment; that stretch reads AFLTGVYGMWNIYIFALLILY. Topologically, residues 536–594 are cytoplasmic; sequence APSHKQWPTMHHSDETTQSNENIVASAASEEIEFSHLPSDSNPSEISSLTSFTRKVAFD. Residues 571-594 are disordered; that stretch reads HLPSDSNPSEISSLTSFTRKVAFD. A compositionally biased stretch (polar residues) spans 573–588; sequence PSDSNPSEISSLTSFT.

This sequence belongs to the wntless family. As to quaternary structure, interacts with wg; in the Golgi. Interacts with Vps35, a component of the retromer complex; wls stability is regulated by Vps35. Ubiquitously expressed in the wing imaginal disk, increased expression is observed in a stripe at the dorso-ventral boundary and other regions of the wing disk that express wg. Also expresses in the leg imaginal disk. During larval development, expression is seen in both motorneurons and muscle.

The protein localises to the presynaptic cell membrane. The protein resides in the postsynaptic cell membrane. It localises to the cell membrane. It is found in the endosome membrane. Its subcellular location is the endoplasmic reticulum membrane. The protein localises to the golgi apparatus membrane. A segment polarity gene required for wingless (wg)-dependent patterning processes, acting in both wg-sending cells and wg-target cells. In non-neuronal cells wls directs wg secretion. The wls traffic loop encompasses the Golgi, the cell surface, an endocytic compartment and a retrograde route leading back to the Golgi, and involves clathrin-mediated endocytosis and the retromer complex (a conserved protein complex consisting of Vps35 and Vps26). In neuronal cells (the larval motorneuron NMJ), the wg signal moves across the synapse via the release of wls-containing exosome-like vesicles. Postsynaptic wls is required for the trafficking of fz2 through the fz2-interacting protein Grip. The chain is Protein wntless from Drosophila melanogaster (Fruit fly).